A 437-amino-acid polypeptide reads, in one-letter code: Protein translocase subunit SecY (437 aa).

The next 10 helical transmembrane spans lie at 19–39 (LFTL…APGV), 68–88 (LLQI…SIIL), 121–141 (VALA…GALF), 156–176 (IFTT…VMWL), 188–208 (GMSI…LWAI), 218–238 (WIEF…VVFV), 274–294 (GVIP…IVQF), 317–337 (YIAT…AISF), 378–398 (SLYL…FGGA), and 400–420 (QNFP…LETV).

Belongs to the SecY/SEC61-alpha family. As to quaternary structure, component of the Sec protein translocase complex. Heterotrimer consisting of SecY, SecE and SecG subunits. The heterotrimers can form oligomers, although 1 heterotrimer is thought to be able to translocate proteins. Interacts with the ribosome. Interacts with SecDF, and other proteins may be involved. Interacts with SecA.

It is found in the cell membrane. In terms of biological role, the central subunit of the protein translocation channel SecYEG. Consists of two halves formed by TMs 1-5 and 6-10. These two domains form a lateral gate at the front which open onto the bilayer between TMs 2 and 7, and are clamped together by SecE at the back. The channel is closed by both a pore ring composed of hydrophobic SecY resides and a short helix (helix 2A) on the extracellular side of the membrane which forms a plug. The plug probably moves laterally to allow the channel to open. The ring and the pore may move independently. The polypeptide is Protein translocase subunit SecY (Streptomyces griseus).